The chain runs to 827 residues: Ribosome biogenesis protein ERB1 (827 aa).

The tract at residues 1–129 is disordered; it reads MVHSKKDKSV…DFSDDNDTRP (129 aa). Over residues 7–18 the composition is skewed to basic and acidic residues; the sequence is DKSVMKHSDIKK. Residues 45–60 show a composition bias toward acidic residues; it reads CDSDDDEEFQSAEEEV. Residues 61–77 show a composition bias toward low complexity; the sequence is LSSGSESSSKEGSTPGS. Acidic residues-rich tracts occupy residues 81-99 and 108-124; these read GSDEEAEDEDADEEEDEDA and EEGDSEGEYGSEDFSDD. The tract at residues 291–409 is required for interaction with NOP7; sequence RFVPSKHEAK…LRKVPGYGES (119 aa). A required for interaction with YTM1 region spans residues 409 to 445; it reads SVRERFERSLDLYLAPRVRKNKLNIDPESLIPELPSP. WD repeat units lie at residues 461-500, 509-549, 657-695, 698-737, 741-780, and 796-827; these read GHKGKIRTLSIDPSGLWLATGSDDGTVRVWEILTGREVYK, NQDD…FEVE, KSKGIIMDAKFHPFKPQLFVCSQRYIRIYDLSQQVLVKK, PGARWLSTIDIHPRGDNLIASSFDKRVLWHDLDLAATPYK, YHEKAVRSVGFHKKLPLFCSAADDGTIHVFHGTVYDDMMK, and VNSLGVLDTVWHPREAWLFSAGADNTARLWTT.

This sequence belongs to the WD repeat BOP1/ERB1 family. As to quaternary structure, component of the NOP7 complex, composed of ERB1, NOP7 and YTM1. The complex is held together by ERB1, which interacts with NOP7 via its N-terminal domain and with YTM1 via a high-affinity interaction between the seven-bladed beta-propeller domains of the 2 proteins. The NOP7 complex associates with the 66S pre-ribosome.

The protein resides in the nucleus. It localises to the nucleolus. It is found in the nucleoplasm. Component of the NOP7 complex, which is required for maturation of the 25S and 5.8S ribosomal RNAs and formation of the 60S ribosome. The sequence is that of Ribosome biogenesis protein ERB1 from Eremothecium gossypii (strain ATCC 10895 / CBS 109.51 / FGSC 9923 / NRRL Y-1056) (Yeast).